A 245-amino-acid polypeptide reads, in one-letter code: 1-(5-phosphoribosyl)-5-[(5-phosphoribosylamino)methylideneamino] imidazole-4-carboxamide isomerase (245 aa).

Asp-7 (proton acceptor) is an active-site residue. Asp-129 functions as the Proton donor in the catalytic mechanism.

This sequence belongs to the HisA/HisF family.

The protein localises to the cytoplasm. It carries out the reaction 1-(5-phospho-beta-D-ribosyl)-5-[(5-phospho-beta-D-ribosylamino)methylideneamino]imidazole-4-carboxamide = 5-[(5-phospho-1-deoxy-D-ribulos-1-ylimino)methylamino]-1-(5-phospho-beta-D-ribosyl)imidazole-4-carboxamide. The protein operates within amino-acid biosynthesis; L-histidine biosynthesis; L-histidine from 5-phospho-alpha-D-ribose 1-diphosphate: step 4/9. This Shewanella loihica (strain ATCC BAA-1088 / PV-4) protein is 1-(5-phosphoribosyl)-5-[(5-phosphoribosylamino)methylideneamino] imidazole-4-carboxamide isomerase.